The chain runs to 45 residues: Large ribosomal subunit protein bL34 (45 aa).

Belongs to the bacterial ribosomal protein bL34 family.

The chain is Large ribosomal subunit protein bL34 from Corynebacterium urealyticum (strain ATCC 43042 / DSM 7109).